The sequence spans 213 residues: Thiamine-phosphate synthase (213 aa).

4-amino-2-methyl-5-(diphosphooxymethyl)pyrimidine is bound by residues 39-43 (QLREK) and asparagine 71. Mg(2+) contacts are provided by aspartate 72 and aspartate 91. Serine 110 lines the 4-amino-2-methyl-5-(diphosphooxymethyl)pyrimidine pocket. Residue 136 to 138 (TGT) coordinates 2-[(2R,5Z)-2-carboxy-4-methylthiazol-5(2H)-ylidene]ethyl phosphate. Lysine 139 provides a ligand contact to 4-amino-2-methyl-5-(diphosphooxymethyl)pyrimidine. Residues glycine 166 and 186–187 (VS) contribute to the 2-[(2R,5Z)-2-carboxy-4-methylthiazol-5(2H)-ylidene]ethyl phosphate site.

It belongs to the thiamine-phosphate synthase family. Requires Mg(2+) as cofactor.

The catalysed reaction is 2-[(2R,5Z)-2-carboxy-4-methylthiazol-5(2H)-ylidene]ethyl phosphate + 4-amino-2-methyl-5-(diphosphooxymethyl)pyrimidine + 2 H(+) = thiamine phosphate + CO2 + diphosphate. It catalyses the reaction 2-(2-carboxy-4-methylthiazol-5-yl)ethyl phosphate + 4-amino-2-methyl-5-(diphosphooxymethyl)pyrimidine + 2 H(+) = thiamine phosphate + CO2 + diphosphate. The enzyme catalyses 4-methyl-5-(2-phosphooxyethyl)-thiazole + 4-amino-2-methyl-5-(diphosphooxymethyl)pyrimidine + H(+) = thiamine phosphate + diphosphate. Its pathway is cofactor biosynthesis; thiamine diphosphate biosynthesis; thiamine phosphate from 4-amino-2-methyl-5-diphosphomethylpyrimidine and 4-methyl-5-(2-phosphoethyl)-thiazole: step 1/1. Functionally, condenses 4-methyl-5-(beta-hydroxyethyl)thiazole monophosphate (THZ-P) and 2-methyl-4-amino-5-hydroxymethyl pyrimidine pyrophosphate (HMP-PP) to form thiamine monophosphate (TMP). This Clostridium botulinum (strain Eklund 17B / Type B) protein is Thiamine-phosphate synthase.